The following is a 132-amino-acid chain: Transthyretin-like protein 16 (132 aa).

A signal peptide spans 1 to 19; that stretch reads MRSLVVCLLLAACALECTA. Residue Asn23 is glycosylated (N-linked (GlcNAc...) asparagine).

The protein belongs to the nematode transthyretin-like family.

Its subcellular location is the secreted. The sequence is that of Transthyretin-like protein 16 (ttr-16) from Caenorhabditis elegans.